A 687-amino-acid chain; its full sequence is Histone deacetylase clr3 (687 aa).

Positions 55-385 (KKSGLCYDPR…ALAVAQSLLG (331 aa)) are histone deacetylase. The active site involves His-195.

The protein belongs to the histone deacetylase family. HD type 2 subfamily. In terms of assembly, interacts with ccq1, clr1, clr2 and mit1.

It is found in the nucleus. The protein localises to the chromosome. The protein resides in the centromere. Its subcellular location is the telomere. The enzyme catalyses N(6)-acetyl-L-lysyl-[histone] + H2O = L-lysyl-[histone] + acetate. In terms of biological role, responsible for the deacetylation of lysine residues on the N-terminal part of the core histones (H2A, H2B, H3 and H4). Histone deacetylation gives a tag for epigenetic repression and plays an important role in transcriptional regulation, cell cycle progression and developmental events. Histone deacetylases act via the formation of large multiprotein complexes. Required for proper positioning of nucleosomes at heterochromatic loci and for transcriptional gene silencing (TGS) function of the Snf2/Hdac-containing repressor complex (SHREC). The chain is Histone deacetylase clr3 (clr3) from Schizosaccharomyces pombe (strain 972 / ATCC 24843) (Fission yeast).